We begin with the raw amino-acid sequence, 358 residues long: Magnesium-protoporphyrin IX monomethyl ester [oxidative] cyclase 2 (358 aa).

Belongs to the AcsF family. Fe cation serves as cofactor.

The enzyme catalyses Mg-protoporphyrin IX 13-monomethyl ester + 3 NADPH + 3 O2 + 2 H(+) = 3,8-divinyl protochlorophyllide a + 3 NADP(+) + 5 H2O. It participates in porphyrin-containing compound metabolism; chlorophyll biosynthesis (light-independent). Catalyzes the formation of the isocyclic ring in chlorophyll biosynthesis. Mediates the cyclase reaction, which results in the formation of divinylprotochlorophyllide (Pchlide) characteristic of all chlorophylls from magnesium-protoporphyrin IX 13-monomethyl ester (MgPMME). In Nostoc sp. (strain PCC 7120 / SAG 25.82 / UTEX 2576), this protein is Magnesium-protoporphyrin IX monomethyl ester [oxidative] cyclase 2.